Consider the following 297-residue polypeptide: Counting factor 45-1 (297 aa).

The signal sequence occupies residues 1 to 20 (MNKLISLLLVCLVAIALVNA). The region spanning 24 to 235 (IDFDSDTVNS…SASTGSGSGS (212 aa)) is the Ch-type lysozyme domain. Residues D29, D119, and E121 contribute to the active site. Residue N166 is glycosylated (N-linked (GlcNAc...) asparagine). The segment at 231–296 (SGSGSSSGSS…GSSSGSGSGS (66 aa)) is S-G-S motif repeats. The segment at 231–297 (SGSGSSSGSS…SSSGSGSGSS (67 aa)) is disordered. The span at 234 to 275 (GSSSGSSSGSSSGSSSGSGSSSGSGSSSGSSSGSGSGSSSSG) shows a compositional bias: low complexity. A compositionally biased stretch (gly residues) spans 276 to 297 (SGSGSGSSSGSGSSSGSGSGSS).

It belongs to the glycosyl hydrolase 25 family. In terms of assembly, monomer. Component of the counting factor (CF) complex, which includes cf60, cf50, cf45-1 and ctnA.

The protein localises to the secreted. In terms of biological role, cell-counting factor that limits the maximum size of the multicellular structure during aggregation. The protein is Counting factor 45-1 (cf45-1) of Dictyostelium discoideum (Social amoeba).